Consider the following 581-residue polypeptide: Metal transporter Nramp7.1 (581 aa).

Residues asparagine 11 and asparagine 19 are each glycosylated (N-linked (GlcNAc...) asparagine). 7 helical membrane passes run 57 to 77, 90 to 110, 146 to 166, 181 to 201, 224 to 244, 270 to 290, and 307 to 327; these read FLSY…PGNL, ELLW…SLAA, YCLW…EGII, LLIG…WVGV, LLIA…MSYV, IALL…ALVL, and YFLI…LAVI. N-linked (GlcNAc...) asparagine glycosylation occurs at asparagine 338. Transmembrane regions (helical) follow at residues 370-390, 409-429, 434-454, 473-493, and 513-533; these read IYAI…TYAG, LVTR…GGSS, LIII…FALI, IYII…NIYY, and VFIG…VIYL. Residues 551–581 are disordered; sequence PQQQANMENGLGPEMERVPYREDLADIPLPE. Positions 564–574 are enriched in basic and acidic residues; sequence EMERVPYREDL.

Belongs to the NRAMP (TC 2.A.55) family.

It localises to the membrane. Probable divalent metal transporter. The chain is Metal transporter Nramp7.1 from Populus trichocarpa (Western balsam poplar).